The chain runs to 1145 residues: Adenylate cyclase type 3 (1145 aa).

Topologically, residues 1–79 are cytoplasmic; that stretch reads MPRNQGFSDP…FKRQRHETLL (79 aa). The next 5 membrane-spanning stretches (helical) occupy residues 80–100, 105–125, 139–159, 173–193, and 226–246; these read VLVV…AVVF, LAPL…FVLC, VPYL…GLNF, AFFV…IVII, and ILAN…SYYM. Residues D324, I325, and D368 each coordinate Mg(2+). ATP contacts are provided by residues 324–329 and 366–368; these read DIVGFT and LGD. Residues 381–401 form a helical membrane-spanning segment; it reads EDHAVCSILMGLAMVEAISYV. Residues 402 to 631 lie on the Cytoplasmic side of the membrane; it reads REKTKTGVDM…RYSVEKEKQS (230 aa). An ATP-binding site is contributed by R412. A Glycyl lysine isopeptide (Lys-Gly) (interchain with G-Cter in SUMO3) cross-link involves residue K465. Positions 504–564 are disordered; sequence QNGLNGSAVP…DNPSFPNPRR (61 aa). Composition is skewed to low complexity over residues 516–526 and 535–544; these read APASSKPSSPA and GSAHASGSTS. Residue S524 is modified to Phosphoserine. S579 is subject to Phosphoserine. 3 helical membrane passes run 632–652, 663–683, and 707–727; these read GAAF…EILI, FVVG…AIFP, and WAML…LSCL. N735 is a glycosylation site (N-linked (GlcNAc...) asparagine). 3 consecutive transmembrane segments (helical) span residues 753-773, 774-794, and 834-854; these read YNYV…VSHM, VKLT…LYAW, and LPLV…MLSF. Topologically, residues 855-1145 are cytoplasmic; that stretch reads YYFSRHVEKL…TLPHQVVDNP (291 aa). ATP-binding positions include K976, 1063-1065, and 1070-1074; these read DIW and NVASR. S1077 carries the post-translational modification Phosphoserine; by CaMK2. K1110 contacts ATP.

Belongs to the adenylyl cyclase class-4/guanylyl cyclase family. The cofactor is Mg(2+). Mn(2+) is required as a cofactor. In terms of processing, N-glycosylated. Post-translationally, rapidly phosphorylated after stimulation by odorants or forskolin. Phosphorylation by CaMK2 at Ser-1077 down-regulates enzyme activity. Sumoylated. Sumoylation is required for targeting of olfactory cilia. Detected in the acrosomal region of epididymal spermatozoa, the acrosomal region of round spermatids and in elongating spermatids. Detected in cilia in the olfactory epithelium (at protein level). Detected in olfactory epithelium neurons. Detected in brain, testis, late pachytene spermatocytes, round spermatids and elongating spermatids.

The protein localises to the cell membrane. Its subcellular location is the cell projection. The protein resides in the cilium. It localises to the golgi apparatus. It is found in the cytoplasm. The catalysed reaction is ATP = 3',5'-cyclic AMP + diphosphate. Its activity is regulated as follows. Specifically activated by the G alpha protein GNAL/G(olf) in signaling cascades triggered by odorant receptors. Activated by forskolin. After forskolin treatment, activity is further increased by calcium/calmodulin. In the absence of forskolin, calcium/calmodulin has little effect on enzyme activity. Catalyzes the formation of the signaling molecule cAMP in response to G-protein signaling. Participates in signaling cascades triggered by odorant receptors via its function in cAMP biosynthesis: specifically activated by G alpha protein GNAL/G(olf) in olfactory epithelium. Required for the perception of odorants. Required for normal sperm motility and normal male fertility. Plays a role in regulating insulin levels and body fat accumulation in response to a high fat diet. This Mus musculus (Mouse) protein is Adenylate cyclase type 3 (Adcy3).